The following is a 490-amino-acid chain: Limb region 1 protein (490 aa).

Topologically, residues Met1 to Arg19 are extracellular. The helical transmembrane segment at Glu20–Ile40 threads the bilayer. Residues Arg41 to Phe62 are Cytoplasmic-facing. Residues Leu63–Ile83 traverse the membrane as a helical segment. Over Ser84 to Asn110 the chain is Extracellular. A helical membrane pass occupies residues Leu111 to Leu131. The Cytoplasmic portion of the chain corresponds to Glu132–Leu151. A helical transmembrane segment spans residues Val152–Ile172. Topologically, residues Asp173–Glu187 are extracellular. A helical transmembrane segment spans residues Phe188 to Cys208. Over Thr209–Asn291 the chain is Cytoplasmic. Residues Ser256–Ala287 adopt a coiled-coil conformation. A helical transmembrane segment spans residues Leu292–Val312. Residues Ala313–Ser339 lie on the Extracellular side of the membrane. The helical transmembrane segment at Leu340–Val360 threads the bilayer. Residues Ser361–Thr383 lie on the Cytoplasmic side of the membrane. The chain crosses the membrane as a helical span at residues Met384–Met404. Over Ser405–Gly426 the chain is Extracellular. The chain crosses the membrane as a helical span at residues Asn427–Ile447. The Cytoplasmic segment spans residues Arg448 to Leu490.

It belongs to the LIMR family.

The protein localises to the membrane. Functionally, putative membrane receptor. In Mus musculus (Mouse), this protein is Limb region 1 protein (Lmbr1).